The following is a 273-amino-acid chain: MRQVAFYGKGGIGKSTTQQNTAAALASMGYRLMVVGCDPKADCTRLLLRGVRQPSVLDTLRDVGPESVQLEKVVVQGYGGVKCVESGGPEPGVGCGGRGVITAIQTLETLGAYKDDLDYVFYDVLGDVVCGGFAMPIREGYAEEIYIVCSGEYMALFAANNICKGIKKFAERGYARLGGLVCNSRLVENEQALVKEFARRLNTKMIHFIPRSKDVQRAEINKKTVIDYDPDLPQAQEYRELARKIDENDEFTIPTPITQEELEDLMREYGIVD.

Position 8-15 (8-15) interacts with ATP; the sequence is GKGGIGKS. Cysteine 95 provides a ligand contact to [4Fe-4S] cluster. Arginine 98 carries the ADP-ribosylarginine; by dinitrogenase reductase ADP-ribosyltransferase modification. Cysteine 130 contacts [4Fe-4S] cluster.

This sequence belongs to the NifH/BchL/ChlL family. In terms of assembly, homodimer. Requires [4Fe-4S] cluster as cofactor. In terms of processing, the reversible ADP-ribosylation of Arg-98 inactivates the nitrogenase reductase and regulates nitrogenase activity.

The catalysed reaction is N2 + 8 reduced [2Fe-2S]-[ferredoxin] + 16 ATP + 16 H2O = H2 + 8 oxidized [2Fe-2S]-[ferredoxin] + 2 NH4(+) + 16 ADP + 16 phosphate + 6 H(+). The key enzymatic reactions in nitrogen fixation are catalyzed by the nitrogenase complex, which has 2 components: the iron protein and the molybdenum-iron protein. This chain is Nitrogenase iron protein, found in Roseiflexus castenholzii (strain DSM 13941 / HLO8).